The sequence spans 346 residues: NADH-ubiquinone oxidoreductase chain 2 (346 aa).

11 helical membrane-spanning segments follow: residues 1-21 (MNPH…TITI), 25-45 (HWVL…PLIS), 60-80 (FLTQ…NAWA), 95-115 (CLLL…HFWF), 124-144 (LMTA…LLLM), 149-169 (LNPA…GWMG), 178-195 (ILAF…IILV), 200-219 (LALL…FMAL), 242-262 (ATLM…GFMP), 274-294 (EMTP…FFYL), and 326-346 (AILA…HAIV).

The protein belongs to the complex I subunit 2 family.

It is found in the mitochondrion inner membrane. The enzyme catalyses a ubiquinone + NADH + 5 H(+)(in) = a ubiquinol + NAD(+) + 4 H(+)(out). Functionally, core subunit of the mitochondrial membrane respiratory chain NADH dehydrogenase (Complex I) that is believed to belong to the minimal assembly required for catalysis. Complex I functions in the transfer of electrons from NADH to the respiratory chain. The immediate electron acceptor for the enzyme is believed to be ubiquinone. This Mareca penelope (Eurasian wigeon) protein is NADH-ubiquinone oxidoreductase chain 2 (MT-ND2).